A 233-amino-acid polypeptide reads, in one-letter code: Guanylate kinase (233 aa).

One can recognise a Guanylate kinase-like domain in the interval 3–184 (GTIFIISAPS…AVEQLRAIVL (182 aa)). 10–17 (APSGSGKS) contributes to the ATP binding site.

Belongs to the guanylate kinase family.

It is found in the cytoplasm. The enzyme catalyses GMP + ATP = GDP + ADP. Functionally, essential for recycling GMP and indirectly, cGMP. In Koribacter versatilis (strain Ellin345), this protein is Guanylate kinase.